Here is a 65-residue protein sequence, read N- to C-terminus: Potassium channel toxin kappa-KTx 2.7 (65 aa).

Positions 1–26 (MKTSGTVYVFLLLLAFGIFTDISSAC) are cleaved as a signal peptide. The propeptide occupies 27-39 (SEQMDDEDSYEVE). Disulfide bonds link C45/C63 and C49/C59.

Belongs to the short scorpion toxin superfamily. Potassium channel inhibitor kappa-KTx family. Kappa-KTx 2 subfamily. Expressed by the venom gland.

The protein resides in the secreted. Weakly inhibits the Kv7.1/KCNQ1 channel (10 uM of the toxin inhibits currents by 17.8%). This Heterometrus petersii (Asian forest scorpion) protein is Potassium channel toxin kappa-KTx 2.7.